We begin with the raw amino-acid sequence, 953 residues long: Isoleucine--tRNA ligase (953 aa).

Residues 58–68 (PYANGFIHLGH) carry the 'HIGH' region motif. Position 573 (E573) interacts with L-isoleucyl-5'-AMP. A 'KMSKS' region motif is present at residues 614-618 (KMSKS). Position 617 (K617) interacts with ATP. Residues C916, C919, C936, and C939 each coordinate Zn(2+).

Belongs to the class-I aminoacyl-tRNA synthetase family. IleS type 1 subfamily. Monomer. Zn(2+) is required as a cofactor.

Its subcellular location is the cytoplasm. The catalysed reaction is tRNA(Ile) + L-isoleucine + ATP = L-isoleucyl-tRNA(Ile) + AMP + diphosphate. Functionally, catalyzes the attachment of isoleucine to tRNA(Ile). As IleRS can inadvertently accommodate and process structurally similar amino acids such as valine, to avoid such errors it has two additional distinct tRNA(Ile)-dependent editing activities. One activity is designated as 'pretransfer' editing and involves the hydrolysis of activated Val-AMP. The other activity is designated 'posttransfer' editing and involves deacylation of mischarged Val-tRNA(Ile). The chain is Isoleucine--tRNA ligase from Blochmanniella floridana.